The following is a 198-amino-acid chain: MRKSKRERQRLLQETIRENPFVTDEELAEKFSVSVQTIRLDRLELSIPELRERIKHVARQSFADKVRALPLEEVIGDIIDIEPDASAISIFDVKEEHVFRRTRIARGHHLFAQANSLAVAVIHDELALTAKATIRFVRQVKAGERVVAKAKVTGKTKSGRTVVDVNSYVGQELVFSGTFEMYRSNMEKKDGDSNEYRD.

The region spanning threonine 102–tyrosine 168 is the MaoC-like domain.

Belongs to the FapR family.

Transcriptional factor involved in regulation of membrane lipid biosynthesis by repressing genes involved in fatty acid and phospholipid metabolism. This chain is Transcription factor FapR, found in Geobacillus thermodenitrificans (strain NG80-2).